Consider the following 124-residue polypeptide: Large ribosomal subunit protein uL22c (124 aa).

It belongs to the universal ribosomal protein uL22 family. Part of the 50S ribosomal subunit.

It is found in the plastid. It localises to the chloroplast. Functionally, this protein binds specifically to 23S rRNA. Its function is as follows. The globular domain of the protein is located near the polypeptide exit tunnel on the outside of the subunit, while an extended beta-hairpin is found that lines the wall of the exit tunnel in the center of the 70S ribosome. In Amborella trichopoda, this protein is Large ribosomal subunit protein uL22c (rpl22).